Here is a 52-residue protein sequence, read N- to C-terminus: Large ribosomal subunit protein eL39 (52 aa).

It belongs to the eukaryotic ribosomal protein eL39 family. Interacts with YIH1.

The sequence is that of Large ribosomal subunit protein eL39 (RPL39) from Encephalitozoon cuniculi (strain GB-M1) (Microsporidian parasite).